The primary structure comprises 226 residues: ATP synthase F(0) complex subunit a (226 aa).

A run of 6 helical transmembrane segments spans residues 6–26, 68–88, 97–117, 138–158, 164–184, and 195–215; these read FAPF…IITF, WTLM…LGLL, QLSM…IMGF, IPML…ALAV, ITAG…LSSI, and ILFL…YVFT.

It belongs to the ATPase A chain family. As to quaternary structure, component of the ATP synthase complex composed at least of ATP5F1A/subunit alpha, ATP5F1B/subunit beta, ATP5MC1/subunit c (homooctomer), MT-ATP6/subunit a, MT-ATP8/subunit 8, ATP5ME/subunit e, ATP5MF/subunit f, ATP5MG/subunit g, ATP5MK/subunit k, ATP5MJ/subunit j, ATP5F1C/subunit gamma, ATP5F1D/subunit delta, ATP5F1E/subunit epsilon, ATP5PF/subunit F6, ATP5PB/subunit b, ATP5PD/subunit d, ATP5PO/subunit OSCP. ATP synthase complex consists of a soluble F(1) head domain (subunits alpha(3) and beta(3)) - the catalytic core - and a membrane F(0) domain - the membrane proton channel (subunits c, a, 8, e, f, g, k and j). These two domains are linked by a central stalk (subunits gamma, delta, and epsilon) rotating inside the F1 region and a stationary peripheral stalk (subunits F6, b, d, and OSCP). Interacts with DNAJC30; interaction is direct.

The protein localises to the mitochondrion inner membrane. The enzyme catalyses H(+)(in) = H(+)(out). Subunit a, of the mitochondrial membrane ATP synthase complex (F(1)F(0) ATP synthase or Complex V) that produces ATP from ADP in the presence of a proton gradient across the membrane which is generated by electron transport complexes of the respiratory chain. ATP synthase complex consist of a soluble F(1) head domain - the catalytic core - and a membrane F(1) domain - the membrane proton channel. These two domains are linked by a central stalk rotating inside the F(1) region and a stationary peripheral stalk. During catalysis, ATP synthesis in the catalytic domain of F(1) is coupled via a rotary mechanism of the central stalk subunits to proton translocation. With the subunit c (ATP5MC1), forms the proton-conducting channel in the F(0) domain, that contains two crucial half-channels (inlet and outlet) that facilitate proton movement from the mitochondrial intermembrane space (IMS) into the matrix. Protons are taken up via the inlet half-channel and released through the outlet half-channel, following a Grotthuss mechanism. In Didelphis virginiana (North American opossum), this protein is ATP synthase F(0) complex subunit a.